We begin with the raw amino-acid sequence, 442 residues long: Transcriptional coactivator YAP1 (442 aa).

Phosphoserine; by LATS1 and LATS2 is present on residues S21, S69, and S87. 2 disordered regions span residues 51–89 (LPDS…HSSP) and 97–116 (VSPG…QHLR). At S119 the chain carries Phosphoserine; by LATS1 and LATS2. WW domains follow at residues 126-159 (MPLP…DPRK) and 186-219 (GPLP…DPRL). Residues 230–254 (ISQSAPVKQGSQLPSSPQSGVMSGN) form a disordered region. The span at 238-249 (QGSQLPSSPQSG) shows a compositional bias: low complexity. Residues 247–442 (QSGVMSGNNP…IDKENFLTWL (196 aa)) form a transactivation domain region. A coiled-coil region spans residues 258 to 279 (RLQQIHIEKERLRIKQELLRQR). The disordered stretch occupies residues 286-374 (RNQLPTSMEQ…DTLGPGSMAT (89 aa)). Polar residues-rich tracts occupy residues 288 to 304 (QLPT…NPVS), 313 to 329 (RNMT…SGTY), and 337 to 347 (DSGLSMSSYSV).

Belongs to the YAP1 family. Phosphorylated by lats1 and lats2; leading to cytoplasmic translocation and inactivation. As to expression, expressed in the notochord, brain, eyes, branchial arches and pectoral fins.

The protein localises to the cytoplasm. It is found in the nucleus. It localises to the cell junction. The protein resides in the tight junction. Its subcellular location is the cell membrane. Transcriptional regulator which can act both as a coactivator and a corepressor and is the critical downstream regulatory target in the Hippo signaling pathway that plays a pivotal role in organ size control and tumor suppression by restricting proliferation and promoting apoptosis. Required for expansion of the neural plate and neural plate border zone progenitor pools. Acts as a direct regulator of pax3 expression via interaction with tead1. Plays a key role in tissue tension and 3D tissue shape by regulating cortical actomyosin network formation. The protein is Transcriptional coactivator YAP1 (yap1) of Danio rerio (Zebrafish).